Here is a 353-residue protein sequence, read N- to C-terminus: Holliday junction branch migration complex subunit RuvB (353 aa).

Positions 1–182 are large ATPase domain (RuvB-L); sequence MPERLITPKG…FGIVQRLEFY (182 aa). ATP is bound by residues isoleucine 21, arginine 22, glycine 63, lysine 66, threonine 67, threonine 68, 129–131, arginine 172, tyrosine 182, and arginine 219; that span reads EDF. Threonine 67 serves as a coordination point for Mg(2+). Residues 183 to 253 form a small ATPAse domain (RuvB-S) region; sequence NVQDLTRIVQ…VADRALDLLD (71 aa). The interval 256-353 is head domain (RuvB-H); it reads VQGFDAQDRR…QEEGGGEGKL (98 aa). Positions 292, 311, and 316 each coordinate DNA.

It belongs to the RuvB family. Homohexamer. Forms an RuvA(8)-RuvB(12)-Holliday junction (HJ) complex. HJ DNA is sandwiched between 2 RuvA tetramers; dsDNA enters through RuvA and exits via RuvB. An RuvB hexamer assembles on each DNA strand where it exits the tetramer. Each RuvB hexamer is contacted by two RuvA subunits (via domain III) on 2 adjacent RuvB subunits; this complex drives branch migration. In the full resolvosome a probable DNA-RuvA(4)-RuvB(12)-RuvC(2) complex forms which resolves the HJ.

The protein resides in the cytoplasm. The catalysed reaction is ATP + H2O = ADP + phosphate + H(+). Its function is as follows. The RuvA-RuvB-RuvC complex processes Holliday junction (HJ) DNA during genetic recombination and DNA repair, while the RuvA-RuvB complex plays an important role in the rescue of blocked DNA replication forks via replication fork reversal (RFR). RuvA specifically binds to HJ cruciform DNA, conferring on it an open structure. The RuvB hexamer acts as an ATP-dependent pump, pulling dsDNA into and through the RuvAB complex. RuvB forms 2 homohexamers on either side of HJ DNA bound by 1 or 2 RuvA tetramers; 4 subunits per hexamer contact DNA at a time. Coordinated motions by a converter formed by DNA-disengaged RuvB subunits stimulates ATP hydrolysis and nucleotide exchange. Immobilization of the converter enables RuvB to convert the ATP-contained energy into a lever motion, pulling 2 nucleotides of DNA out of the RuvA tetramer per ATP hydrolyzed, thus driving DNA branch migration. The RuvB motors rotate together with the DNA substrate, which together with the progressing nucleotide cycle form the mechanistic basis for DNA recombination by continuous HJ branch migration. Branch migration allows RuvC to scan DNA until it finds its consensus sequence, where it cleaves and resolves cruciform DNA. The protein is Holliday junction branch migration complex subunit RuvB of Thioalkalivibrio sulfidiphilus (strain HL-EbGR7).